A 271-amino-acid chain; its full sequence is DNA-binding protein HEXBP (271 aa).

2 stretches are compositionally biased toward basic and acidic residues: residues 1-12 and 21-42; these read MSETEDVKRPRT and CGKE…DERS. The interval 1 to 42 is disordered; sequence MSETEDVKRPRTESSTSCRNCGKEGHYARECPEADSKGDERS. 4 consecutive CCHC-type zinc fingers follow at residues 16–33, 43–60, 70–87, and 97–114; these read TSCR…ECPE, TTCF…ECPN, MTCF…DCPN, and FECY…DCPS. Residues 107 to 136 form a disordered region; that stretch reads HLSRDCPSSQGGSRGGYGQKRGRSGAQGGY. Gly residues predominate over residues 118-136; sequence GSRGGYGQKRGRSGAQGGY. 5 CCHC-type zinc fingers span residues 140–157, 168–185, 196–213, 222–239, and 253–270; these read RTCY…DCPN, RKCY…ECPS, RACY…ECPE, and RTCY…DCPS.

It is found in the nucleus. Functionally, binds to single-stranded DNA located in the 5' hexanucleotide repeat region of the L.major leishmanolysin (GP63) gene. This is DNA-binding protein HEXBP (HEXBP) from Leishmania major.